A 518-amino-acid chain; its full sequence is Bifunctional methyltransferase (518 aa).

The segment at 1-300 (MQYSIKQILN…SHNRVIEISP (300 aa)) is hemK. Positions 1 to 302 (MQYSIKQILN…NRVIEISPIN (302 aa)) are RF MTase. S-adenosyl-L-methionine is bound by residues 140–144 (GTGSG), Asp163, Trp192, Asn207, Glu347, Glu372, Asn399, and Asp421. Residue 207–210 (NPPY) coordinates substrate. The interval 301–518 (INLNRSYARR…MILQHALTGH (218 aa)) is tRNA (guanine-N(7)-)-methyltransferase. The segment at 305–518 (RSYARRIGKS…MILQHALTGH (214 aa)) is tRNA MTase. Asp421 is an active-site residue. Lys425 and Asp457 together coordinate substrate.

In the C-terminal section; belongs to the class I-like SAM-binding methyltransferase superfamily. TrmB family. The protein in the N-terminal section; belongs to the protein N5-glutamine methyltransferase family. PrmC subfamily.

It catalyses the reaction L-glutaminyl-[peptide chain release factor] + S-adenosyl-L-methionine = N(5)-methyl-L-glutaminyl-[peptide chain release factor] + S-adenosyl-L-homocysteine + H(+). It carries out the reaction guanosine(46) in tRNA + S-adenosyl-L-methionine = N(7)-methylguanosine(46) in tRNA + S-adenosyl-L-homocysteine. Methylates the class 1 translation termination release factors RF1/PrfA and RF2/PrfB on the glutamine residue of the universally conserved GGQ motif. In terms of biological role, catalyzes the formation of N(7)-methylguanine at position 46 (m7G46) in tRNA. The chain is Bifunctional methyltransferase (prmC/trmB) from Rickettsia typhi (strain ATCC VR-144 / Wilmington).